The sequence spans 158 residues: uncharacterized protein (158 aa).

The HTH hxlR-type domain maps to 13–110; sequence ESVGRALELV…WGDEYLPRPE (98 aa).

This is an uncharacterized protein from Mycobacterium tuberculosis (strain ATCC 25618 / H37Rv).